A 430-amino-acid chain; its full sequence is Transcription factor E2F1 (430 aa).

The interval 62–103 is cyclin A:CDK2 binding; sequence ATPQAPRPAPSAPRPALGRPPVKRRLDLETDHQYLAGSSGPF. The interaction with BIRC2/c-IAP1 stretch occupies residues 84-186; it reads KRRLDLETDH…KKSKNHIQWL (103 aa). The interval 95–123 is disordered; the sequence is YLAGSSGPFRGRGRHPGKGVKSPGEKSRY. The DNA-binding element occupies 105–189; sequence GRGRHPGKGV…KNHIQWLGSH (85 aa). N6-acetyllysine occurs at positions 112, 115, and 120. Positions 148–169 are leucine-zipper; the sequence is LNWAAEVLKVQKRRIYDITNVL. The short motif at 153 to 189 is the DEF box element; sequence EVLKVQKRRIYDITNVLEGIQLIAKKSKNHIQWLGSH. Lys-180 is subject to N6-methyllysine; by SETD7. Positions 187-375 are required for interaction with TRIM28; it reads GSHTMVGIGK…QLSPLVAADS (189 aa). Positions 190-279 are dimerization; that stretch reads TMVGIGKRLE…AVDSSETFQI (90 aa). Positions 294-340 are disordered; the sequence is PEESADGISPGKTSCQETSSGEDRTADSGPAGPPPSPPSTSPALDPS. A compositionally biased stretch (pro residues) spans 324–333; sequence AGPPPSPPST. The interval 361–430 is transactivation; sequence PMEEDQLSPL…DFGDLTPLDF (70 aa). 2 positions are modified to phosphoserine: Ser-368 and Ser-396. The tract at residues 402–419 is RB1 binding; sequence LDYHFGLEEGEGIRDLFD. Thr-426 bears the Phosphothreonine mark.

It belongs to the E2F/DP family. Component of the DRTF1/E2F transcription factor complex. Forms heterodimers with DP family members. The E2F1 complex binds specifically hypophosphorylated RB1, the interaction represses E2F1-driven transcription. During the cell cycle, RB1 becomes phosphorylated in mid-to-late G1 phase, detaches from the DRTF1/E2F complex, rendering E2F transcriptionally active. Interacts with TRRAP, which probably mediates its interaction with histone acetyltransferase complexes, leading to transcription activation. Binds TOPBP1 and EAPP. Interacts with ARID3A. Interacts with TRIM28; the interaction inhibits E2F1 acetylation through recruiting HDAC1 and represses its transcriptional activity. Interaction with KAT2B; the interaction acetylates E2F1 enhancing its DNA-binding and transcriptional activity. Interacts with BIRC2/c-IAP1 (via BIR domains). The complex TFDP1:E2F1 interacts with CEBPA; the interaction prevents CEBPA binding to target genes promoters and represses its transcriptional activity. Interacts with RRP1B. Interacts with HCFC1. Interacts with KMT2E; the interaction is probably indirect and is mediated via HCFC1. Interacts with DCAF5 and L3MBTL3; the interaction requires methylation at Lys-180 and is necessary to target E2F1 for ubiquitination by the CRL4-DCAF5 E3 ubiquitin ligase complex. Phosphorylated by CDK2 and cyclin A-CDK2 in the S-phase. Phosphorylation by CHEK2 stabilizes E2F1 upon DNA damage and regulates its effect on transcription and apoptosis. Phosphorylation at Ser-396 by GSK3B promotes interaction with USP11, leading to its deubiquitination and stabilization. Post-translationally, ubiquitinated via 'Lys-63'-linked ubiquitin, leading to its degradation. Deubiquitinated by USP11 following phosphorylation by GSK3B, promoting its stability. In terms of processing, acetylation stimulates DNA-binding. Enhanced under stress conditions such as DNA damage and inhibited by retinoblastoma protein RB1. Regulated by KAP1/TRIM28 which recruits HDAC1 to E2F1 resulting in deacetylation. Acetylated by P/CAF/KAT2B. Methylation at Lys-180 by SETD7 promotes E2F1 ubiquitin-dependent proteasomal degradation.

The protein localises to the nucleus. BIRC2/c-IAP1 stimulates its transcriptional activity. Transcription activator that binds DNA cooperatively with DP proteins through the E2 recognition site, 5'-TTTC[CG]CGC-3' found in the promoter region of a number of genes whose products are involved in cell cycle regulation or in DNA replication. The DRTF1/E2F complex functions in the control of cell-cycle progression from G1 to S phase. E2F1 binds preferentially RB1 in a cell-cycle dependent manner. It can mediate both cell proliferation and TP53/p53-dependent apoptosis. Blocks adipocyte differentiation by binding to specific promoters repressing CEBPA binding to its target gene promoters. Directly activates transcription of PEG10. Positively regulates transcription of RRP1B. The chain is Transcription factor E2F1 from Mus musculus (Mouse).